The primary structure comprises 103 residues: Large ribosomal subunit protein uL24 (103 aa).

The protein belongs to the universal ribosomal protein uL24 family. In terms of assembly, part of the 50S ribosomal subunit.

One of two assembly initiator proteins, it binds directly to the 5'-end of the 23S rRNA, where it nucleates assembly of the 50S subunit. Functionally, one of the proteins that surrounds the polypeptide exit tunnel on the outside of the subunit. This is Large ribosomal subunit protein uL24 from Sinorhizobium fredii (strain NBRC 101917 / NGR234).